The sequence spans 150 residues: D-aminoacyl-tRNA deacylase (150 aa).

A Gly-cisPro motif, important for rejection of L-amino acids motif is present at residues 138-139 (GP).

This sequence belongs to the DTD family. As to quaternary structure, homodimer.

Its subcellular location is the cytoplasm. The enzyme catalyses glycyl-tRNA(Ala) + H2O = tRNA(Ala) + glycine + H(+). It carries out the reaction a D-aminoacyl-tRNA + H2O = a tRNA + a D-alpha-amino acid + H(+). In terms of biological role, an aminoacyl-tRNA editing enzyme that deacylates mischarged D-aminoacyl-tRNAs. Also deacylates mischarged glycyl-tRNA(Ala), protecting cells against glycine mischarging by AlaRS. Acts via tRNA-based rather than protein-based catalysis; rejects L-amino acids rather than detecting D-amino acids in the active site. By recycling D-aminoacyl-tRNA to D-amino acids and free tRNA molecules, this enzyme counteracts the toxicity associated with the formation of D-aminoacyl-tRNA entities in vivo and helps enforce protein L-homochirality. The sequence is that of D-aminoacyl-tRNA deacylase from Phocaeicola vulgatus (strain ATCC 8482 / DSM 1447 / JCM 5826 / CCUG 4940 / NBRC 14291 / NCTC 11154) (Bacteroides vulgatus).